Reading from the N-terminus, the 236-residue chain is Apoptosis regulator Bcl-2 (236 aa).

Positions 10 to 30 (DNREIVMKYIHYKLSQRGYEW) match the BH4 motif. Position 69 is a phosphothreonine; by MAPK8 (T69). The residue at position 70 (S70) is a Phosphoserine; by MAPK8 and PKC. S84 carries the phosphoserine; by MAPK8 modification. The BH3 motif lies at 90–104 (VHLTLRRAGDDFSRR). The BH1 signature appears at 133-152 (ELFRDGVNWGRIVAFFEFGG). The BH2 motif lies at 184-199 (TWIQDNGGWDAFVELY). The helical transmembrane segment at 209 to 230 (FSWLSLKALLSLALVGACITLG) threads the bilayer.

It belongs to the Bcl-2 family. As to quaternary structure, forms homodimers, and heterodimers with BAX, BAD, BAK and Bcl-X(L). Heterodimerization with BAX requires intact BH1 and BH2 motifs, and is necessary for anti-apoptotic activity. Component of the complex, at least composed of LRPPRC, BECN1 and BCL2; the interactions prevent BECN1 from forming an autophagy-inducing complex with PIK3C3. Interacts with EI24. Also interacts with APAF1, BBC3, BCL2L1, BNIPL, MRPL41 and TP53BP2. Binding to FKBP8 seems to target BCL2 to the mitochondria and probably interferes with the binding of BCL2 to its targets. Interacts with BAG1 in an ATP-dependent manner. Interacts with RAF1 (the 'Ser-338' and 'Ser-339' phosphorylated form). Interacts (via the BH4 domain) with EGLN3; the interaction prevents the formation of the BAX-BCL2 complex and inhibits the anti-apoptotic activity of BCL2. Interacts with G0S2; this interaction also prevents the formation of the anti-apoptotic BAX-BCL2 complex. Interacts with RTL10/BOP. Interacts with the SCF(FBXO10) complex. Interacts (via the loop between motifs BH4 and BH3) with NLRP1 (via LRR repeats), but not with NLRP2, NLRP3, NLRP4, PYCARD, nor MEFV. Interacts with GIMAP3/IAN4, GIMAP4/IAN1 and GIMAP5/IAN5. Interacts with BCAP31. Interacts with IRF3; the interaction is inhibited by Sendai virus infection. Interacts with BECN1; thereby inhibiting autophagy in non-starvation conditions. Interacts with AMBRA1; thereby inhibiting autophagy. In terms of processing, phosphorylation/dephosphorylation on Ser-70 regulates anti-apoptotic activity. Growth factor-stimulated phosphorylation on Ser-70 by PKC is required for the anti-apoptosis activity and occurs during the G2/M phase of the cell cycle. In the absence of growth factors, BCL2 appears to be phosphorylated by other protein kinases such as ERKs and stress-activated kinases. Phosphorylated by MAPK8/JNK1 at Thr-69, Ser-70 and Ser-84, which stimulates starvation-induced autophagy. Dephosphorylated by protein phosphatase 2A (PP2A). Post-translationally, proteolytically cleaved by caspases during apoptosis. The cleaved protein, lacking the BH4 motif, has pro-apoptotic activity, causes the release of cytochrome c into the cytosol promoting further caspase activity. Monoubiquitinated by PRKN, leading to an increase in its stability. Ubiquitinated by SCF(FBXO10), leading to its degradation by the proteasome.

Its subcellular location is the mitochondrion outer membrane. The protein resides in the nucleus membrane. The protein localises to the endoplasmic reticulum membrane. It localises to the cytoplasm. Functionally, suppresses apoptosis in a variety of cell systems including factor-dependent lymphohematopoietic and neural cells. Regulates cell death by controlling the mitochondrial membrane permeability. Appears to function in a feedback loop system with caspases. Inhibits caspase activity either by preventing the release of cytochrome c from the mitochondria and/or by binding to the apoptosis-activating factor (APAF-1). Also acts as an inhibitor of autophagy: interacts with BECN1 and AMBRA1 during non-starvation conditions and inhibits their autophagy function. May attenuate inflammation by impairing NLRP1-inflammasome activation, hence CASP1 activation and IL1B release. This Canis lupus familiaris (Dog) protein is Apoptosis regulator Bcl-2 (BCL2).